Here is a 143-residue protein sequence, read N- to C-terminus: uncharacterized protein (143 aa).

The signal sequence occupies residues M1 to A32.

The protein to M.tuberculosis Rv1269c.

This is an uncharacterized protein from Mycobacterium tuberculosis (strain CDC 1551 / Oshkosh).